The primary structure comprises 513 residues: Lysine--tRNA ligase (513 aa).

E422 and E429 together coordinate Mg(2+).

The protein belongs to the class-II aminoacyl-tRNA synthetase family. In terms of assembly, homodimer. Mg(2+) serves as cofactor.

Its subcellular location is the cytoplasm. The catalysed reaction is tRNA(Lys) + L-lysine + ATP = L-lysyl-tRNA(Lys) + AMP + diphosphate. The polypeptide is Lysine--tRNA ligase (Tolumonas auensis (strain DSM 9187 / NBRC 110442 / TA 4)).